The primary structure comprises 1019 residues: StAR-related lipid transfer protein 8 (1019 aa).

Disordered regions lie at residues 92 to 122 (QPLL…KVKK) and 134 to 154 (SLRR…CLAT). Residues 100-115 (SPSNQPFLSPPQGQEG) are compositionally biased toward polar residues. Residue Ser-108 is modified to Phosphoserine. Basic and acidic residues predominate over residues 134–147 (SLRRKEKGDSRQTE). At Arg-168 the chain carries Asymmetric dimethylarginine. Phosphoserine is present on residues Ser-234 and Ser-237. Disordered regions lie at residues 325–355 (MYPD…EVAT) and 406–482 (APAQ…VGAS). Residues 334–347 (KEEEEEEEEEEEEA) are compositionally biased toward acidic residues. 2 stretches are compositionally biased toward polar residues: residues 418–430 (NSTA…SSLS) and 437–455 (ISDT…NSMN). Phosphoserine occurs at positions 494 and 502. Positions 569–773 (PPLIHVQRTG…HMISDCKKLF (205 aa)) constitute a Rho-GAP domain. Residues 731 to 754 (DSSSPRIKSKRSLVGRPGPRDLSE) are disordered. The 209-residue stretch at 805-1013 (AQAAGVSLSL…RDSFPTLQAA (209 aa)) folds into the START domain.

As to quaternary structure, binds both the SH2 and PTB domains of TNS1.

It localises to the cell junction. The protein resides in the focal adhesion. Its function is as follows. Accelerates GTPase activity of RHOA and CDC42, but not RAC1. Stimulates the hydrolysis of phosphatidylinositol 4,5-bisphosphate by PLCD1. The polypeptide is StAR-related lipid transfer protein 8 (Stard8) (Mus musculus (Mouse)).